Here is a 323-residue protein sequence, read N- to C-terminus: Glyoxylate/hydroxypyruvate reductase B (323 aa).

Catalysis depends on residues Arg237 and Glu266. The active-site Proton donor is the His285.

Belongs to the D-isomer specific 2-hydroxyacid dehydrogenase family. GhrB subfamily. In terms of assembly, homodimer.

The protein localises to the cytoplasm. It carries out the reaction glycolate + NADP(+) = glyoxylate + NADPH + H(+). The enzyme catalyses (R)-glycerate + NAD(+) = 3-hydroxypyruvate + NADH + H(+). It catalyses the reaction (R)-glycerate + NADP(+) = 3-hydroxypyruvate + NADPH + H(+). Catalyzes the NADPH-dependent reduction of glyoxylate and hydroxypyruvate into glycolate and glycerate, respectively. This chain is Glyoxylate/hydroxypyruvate reductase B, found in Klebsiella pneumoniae subsp. pneumoniae (strain ATCC 700721 / MGH 78578).